The primary structure comprises 214 residues: MSGATKFIKCVTVGDGAVGKTCMLICYTSNKFPTDYIPTVFDNFSANVSVDGNIVNLGLWDTAGQEDYSRLRPLSYRGADIFVLAFSLISRASYENVLKKWMPELRRFAPNVPIVLVGTKLDLRDHRSYLADHPAASAITTAQGEELRKQIGAAAYIECSSKTQQNIKAVFDTAIKVVLQPPRRRGETTMARKKTRRSTGCSLKNLMCGSACVV.

14-21 lines the GTP pocket; it reads GDGAVGKT. Positions 36–44 match the Effector region motif; it reads YIPTVFDNF. GTP is bound by residues 61-65 and 119-122; these read DTAGQ and TKLD.

It belongs to the small GTPase superfamily. Rho family. May be palmitoylated.

The protein localises to the cytoplasm. It is found in the membrane. Inactive GDP-bound Rho GTPases reside in the cytosol, are found in a complex with Rho GDP-dissociation inhibitors (Rho GDIs), and are released from the GDI protein in order to translocate to membranes upon activation. The chain is Rac-like GTP-binding protein 2 (RAC2) from Oryza sativa subsp. japonica (Rice).